The chain runs to 193 residues: MFFRILALLPLVFLVTAHSLVSRSDVVVPVCNAISNMNTTAIALQNACTNFEAQPTNDMAMPIMKFGFALEGEISSGINVCPSDVLSSGDTEILFNALKDLYDTIQKLVSSILKLKDAIIAAGYEAQSCFAVEMMATSMTTFMDKVYACSANEYKGPLDEMRSGVLTMMAQANFSYCGTVSPRGSSKISGVEI.

The N-terminal stretch at 1–17 is a signal peptide; sequence MFFRILALLPLVFLVTA. Asn38 and Asn173 each carry an N-linked (GlcNAc...) asparagine glycan.

Belongs to the cell wall mannoprotein 1 family. Post-translationally, galactomannoprotein, glycosylated.

It is found in the secreted. Its subcellular location is the cell wall. Functionally, constitutive protein of the cell wall. This is Cell wall galactomannoprotein from Armillaria ostoyae (Armillaria root rot fungus).